The sequence spans 139 residues: Cytochrome c-type biogenesis protein CcmE (139 aa).

Topologically, residues 1–7 are cytoplasmic; the sequence is MTKRQNR. Residues 8-28 traverse the membrane as a helical; Signal-anchor for type II membrane protein segment; that stretch reads MTLVALLVIGVSLTGYLGLKA. Residues 29 to 139 are Periplasmic-facing; that stretch reads FNENLLYFFS…ADALEKAKNK (111 aa). The heme site is built by His120 and Tyr124.

This sequence belongs to the CcmE/CycJ family.

It is found in the cell inner membrane. Heme chaperone required for the biogenesis of c-type cytochromes. Transiently binds heme delivered by CcmC and transfers the heme to apo-cytochromes in a process facilitated by CcmF and CcmH. The protein is Cytochrome c-type biogenesis protein CcmE of Ruthia magnifica subsp. Calyptogena magnifica.